The following is a 305-amino-acid chain: Phosphoribosylaminoimidazole-succinocarboxamide synthase (305 aa).

It belongs to the SAICAR synthetase family.

It catalyses the reaction 5-amino-1-(5-phospho-D-ribosyl)imidazole-4-carboxylate + L-aspartate + ATP = (2S)-2-[5-amino-1-(5-phospho-beta-D-ribosyl)imidazole-4-carboxamido]succinate + ADP + phosphate + 2 H(+). Its pathway is purine metabolism; IMP biosynthesis via de novo pathway; 5-amino-1-(5-phospho-D-ribosyl)imidazole-4-carboxamide from 5-amino-1-(5-phospho-D-ribosyl)imidazole-4-carboxylate: step 1/2. In Tropheryma whipplei (strain TW08/27) (Whipple's bacillus), this protein is Phosphoribosylaminoimidazole-succinocarboxamide synthase.